Reading from the N-terminus, the 1295-residue chain is Serine protease sat autotransporter (1295 aa).

The N-terminal stretch at 1–49 (MNKIYSLKYSAATGGLIAVSELAKRVSGKTNRKLVATMLSLAVAGTVNA) is a signal peptide. Positions 51–300 (NIDISNVWAR…TKYNDKLVSE (250 aa)) constitute a Peptidase S6 domain. Catalysis depends on charge relay system residues His-121, Asp-149, and Ser-256. Positions 1029–1295 (DINGESGAWA…AINANFRYSF (267 aa)) constitute an Autotransporter domain.

Cleaved to release the mature protein from the outer membrane.

Its subcellular location is the periplasm. It is found in the secreted. The protein resides in the cell surface. The protein localises to the cell outer membrane. With respect to regulation, inhibited by phenylmethylsulfonyl fluoride and Pefabloc. Shows serine protease activity and displays cytophatic activity, including elongation, rounding, and detachment of a proportion of the cells from monolayer in culture. Triggers vacuolation within the cytoplasm of the human bladder and kidney cells. This chain is Serine protease sat autotransporter (sat), found in Escherichia coli O6:H1 (strain CFT073 / ATCC 700928 / UPEC).